The chain runs to 444 residues: ATP-dependent protease ATPase subunit HslU (444 aa).

ATP is bound by residues Ile-18 and 60–65 (GVGKTE). Residues 141–161 (DAWGNNEEGDNDSGTRQSFRK) are disordered. Residues Asp-257, Glu-322, and Arg-394 each coordinate ATP.

It belongs to the ClpX chaperone family. HslU subfamily. As to quaternary structure, a double ring-shaped homohexamer of HslV is capped on each side by a ring-shaped HslU homohexamer. The assembly of the HslU/HslV complex is dependent on binding of ATP.

It localises to the cytoplasm. Functionally, ATPase subunit of a proteasome-like degradation complex; this subunit has chaperone activity. The binding of ATP and its subsequent hydrolysis by HslU are essential for unfolding of protein substrates subsequently hydrolyzed by HslV. HslU recognizes the N-terminal part of its protein substrates and unfolds these before they are guided to HslV for hydrolysis. The sequence is that of ATP-dependent protease ATPase subunit HslU from Aliivibrio fischeri (strain MJ11) (Vibrio fischeri).